A 369-amino-acid polypeptide reads, in one-letter code: Flagellar P-ring protein (369 aa).

The first 22 residues, 1-22 (MTKFKHLLALAALLLAAGAAQA), serve as a signal peptide directing secretion.

Belongs to the FlgI family. In terms of assembly, the basal body constitutes a major portion of the flagellar organelle and consists of four rings (L,P,S, and M) mounted on a central rod.

The protein localises to the periplasm. The protein resides in the bacterial flagellum basal body. Functionally, assembles around the rod to form the L-ring and probably protects the motor/basal body from shearing forces during rotation. The polypeptide is Flagellar P-ring protein (Pseudomonas aeruginosa (strain LESB58)).